We begin with the raw amino-acid sequence, 138 residues long: Translation initiation factor 5A (138 aa).

Position 37 is a hypusine (Lys37).

Belongs to the eIF-5A family.

It is found in the cytoplasm. Functions by promoting the formation of the first peptide bond. This chain is Translation initiation factor 5A, found in Pyrococcus furiosus (strain ATCC 43587 / DSM 3638 / JCM 8422 / Vc1).